Consider the following 82-residue polypeptide: Small ribosomal subunit protein eS17 (82 aa).

This sequence belongs to the eukaryotic ribosomal protein eS17 family.

The protein is Small ribosomal subunit protein eS17 of Sulfolobus acidocaldarius (strain ATCC 33909 / DSM 639 / JCM 8929 / NBRC 15157 / NCIMB 11770).